A 490-amino-acid chain; its full sequence is Mitochondria-eating protein (490 aa).

Residues I112 to L210 are a coiled coil. Composition is skewed to low complexity over residues S224–R241 and R456–L490. Disordered regions lie at residues S224–S253 and S455–L490.

Belongs to the MIEAP family.

The protein localises to the cytoplasm. Its subcellular location is the mitochondrion outer membrane. It localises to the mitochondrion matrix. Key regulator of mitochondrial quality that mediates the repairing or degradation of unhealthy mitochondria in response to mitochondrial damage. Mediator of mitochondrial protein catabolic process (also named MALM) by mediating the degradation of damaged proteins inside mitochondria by promoting the accumulation in the mitochondrial matrix of hydrolases that are characteristic of the lysosomal lumen. Also involved in mitochondrion degradation of damaged mitochondria by promoting the formation of vacuole-like structures (named MIV), which engulf and degrade unhealthy mitochondria by accumulating lysosomes. Binds cardiolipin. May form molecular condensates (non-membrane-bounded organelles) within mitochondria that compartmentalize and promote cardiolipin metabolism. The sequence is that of Mitochondria-eating protein (spata18) from Danio rerio (Zebrafish).